We begin with the raw amino-acid sequence, 182 residues long: ATP synthase subunit b, chloroplastic (182 aa).

Residues 29–47 (IINLALLIVLVINVAKDVL) traverse the membrane as a helical segment.

This sequence belongs to the ATPase B chain family. In terms of assembly, F-type ATPases have 2 components, F(1) - the catalytic core - and F(0) - the membrane proton channel. F(1) has five subunits: alpha(3), beta(3), gamma(1), delta(1), epsilon(1). F(0) has four main subunits: a(1), b(1), b'(1) and c(10-14). The alpha and beta chains form an alternating ring which encloses part of the gamma chain. F(1) is attached to F(0) by a central stalk formed by the gamma and epsilon chains, while a peripheral stalk is formed by the delta, b and b' chains.

It is found in the plastid. The protein localises to the chloroplast thylakoid membrane. Functionally, f(1)F(0) ATP synthase produces ATP from ADP in the presence of a proton or sodium gradient. F-type ATPases consist of two structural domains, F(1) containing the extramembraneous catalytic core and F(0) containing the membrane proton channel, linked together by a central stalk and a peripheral stalk. During catalysis, ATP synthesis in the catalytic domain of F(1) is coupled via a rotary mechanism of the central stalk subunits to proton translocation. In terms of biological role, component of the F(0) channel, it forms part of the peripheral stalk, linking F(1) to F(0). In Heterosigma akashiwo (strain NIES-293 / 8280G21-1), this protein is ATP synthase subunit b, chloroplastic.